The primary structure comprises 89 residues: Otospiralin (89 aa).

Positions 1-21 (MQPCVLWWLALGLLLGIPAGA) are cleaved as a signal peptide.

It belongs to the otospiralin family. As to expression, ear specific. Expressed in the cochlea and vestibule, but not in the cochlear nerve, cochlear nucleus, spinal chord, muscle, cerebral cortex, cerebellum, diencephalon and olfactory bulb. In the cochlea, expressed in fibrocytes of the spiral limbus, spiral ligament and suprastrial zone. In the vestibule, expressed in cells located to the stroma below the macular and crista sensory epithelia and in the subepithelial layer of the walls of semicircular canals and maculae.

The protein localises to the secreted. Its function is as follows. May be essential for the survival of the neurosensory epithelium of the inner ear. This is Otospiralin (Otos) from Rattus norvegicus (Rat).